Here is a 246-residue protein sequence, read N- to C-terminus: Bis(5'-nucleosyl)-tetraphosphatase PrpE [asymmetrical] (246 aa).

The protein belongs to the PrpE family. Requires Ni(2+) as cofactor.

The catalysed reaction is P(1),P(4)-bis(5'-guanosyl) tetraphosphate + H2O = GMP + GTP + 2 H(+). Asymmetrically hydrolyzes Ap4p to yield AMP and ATP. The protein is Bis(5'-nucleosyl)-tetraphosphatase PrpE [asymmetrical] of Bacillus cereus (strain AH187).